Consider the following 253-residue polypeptide: 5'-nucleotidase SurE (253 aa).

A divalent metal cation-binding residues include aspartate 8, aspartate 9, serine 39, and asparagine 95.

This sequence belongs to the SurE nucleotidase family. Requires a divalent metal cation as cofactor.

The protein resides in the cytoplasm. It carries out the reaction a ribonucleoside 5'-phosphate + H2O = a ribonucleoside + phosphate. Its function is as follows. Nucleotidase that shows phosphatase activity on nucleoside 5'-monophosphates. The chain is 5'-nucleotidase SurE from Kosmotoga olearia (strain ATCC BAA-1733 / DSM 21960 / TBF 19.5.1).